The chain runs to 245 residues: tRNA1(Val) (adenine(37)-N6)-methyltransferase (245 aa).

This sequence belongs to the methyltransferase superfamily. tRNA (adenine-N(6)-)-methyltransferase family.

The protein resides in the cytoplasm. It carries out the reaction adenosine(37) in tRNA1(Val) + S-adenosyl-L-methionine = N(6)-methyladenosine(37) in tRNA1(Val) + S-adenosyl-L-homocysteine + H(+). Functionally, specifically methylates the adenine in position 37 of tRNA(1)(Val) (anticodon cmo5UAC). In Erwinia tasmaniensis (strain DSM 17950 / CFBP 7177 / CIP 109463 / NCPPB 4357 / Et1/99), this protein is tRNA1(Val) (adenine(37)-N6)-methyltransferase.